The primary structure comprises 387 residues: Phosphoglycerate kinase (387 aa).

Residues 21-23 (DLN), R36, 59-62 (HLGR), R113, and R146 each bind substrate. ATP-binding positions include K197, E314, and 340-343 (GGDT).

The protein belongs to the phosphoglycerate kinase family. In terms of assembly, monomer.

It localises to the cytoplasm. It catalyses the reaction (2R)-3-phosphoglycerate + ATP = (2R)-3-phospho-glyceroyl phosphate + ADP. Its pathway is carbohydrate degradation; glycolysis; pyruvate from D-glyceraldehyde 3-phosphate: step 2/5. This chain is Phosphoglycerate kinase (pgk), found in Vibrio cholerae serotype O1 (strain ATCC 39541 / Classical Ogawa 395 / O395).